The chain runs to 181 residues: UPF0215 protein AF_1433 (181 aa).

This sequence belongs to the UPF0215 family.

The protein is UPF0215 protein AF_1433 of Archaeoglobus fulgidus (strain ATCC 49558 / DSM 4304 / JCM 9628 / NBRC 100126 / VC-16).